The chain runs to 271 residues: Formamidopyrimidine-DNA glycosylase (271 aa).

P2 functions as the Schiff-base intermediate with DNA in the catalytic mechanism. The active-site Proton donor is E3. The active-site Proton donor; for beta-elimination activity is the K57. Residues H90, R109, and K151 each contribute to the DNA site. The FPG-type zinc finger occupies 236-270 (HVYGRGGESCTQCGNLLSEIKLGQRATVFCGLCQT). R260 serves as the catalytic Proton donor; for delta-elimination activity.

It belongs to the FPG family. Monomer. Requires Zn(2+) as cofactor.

The enzyme catalyses Hydrolysis of DNA containing ring-opened 7-methylguanine residues, releasing 2,6-diamino-4-hydroxy-5-(N-methyl)formamidopyrimidine.. The catalysed reaction is 2'-deoxyribonucleotide-(2'-deoxyribose 5'-phosphate)-2'-deoxyribonucleotide-DNA = a 3'-end 2'-deoxyribonucleotide-(2,3-dehydro-2,3-deoxyribose 5'-phosphate)-DNA + a 5'-end 5'-phospho-2'-deoxyribonucleoside-DNA + H(+). Involved in base excision repair of DNA damaged by oxidation or by mutagenic agents. Acts as a DNA glycosylase that recognizes and removes damaged bases. Has a preference for oxidized purines, such as 7,8-dihydro-8-oxoguanine (8-oxoG). Has AP (apurinic/apyrimidinic) lyase activity and introduces nicks in the DNA strand. Cleaves the DNA backbone by beta-delta elimination to generate a single-strand break at the site of the removed base with both 3'- and 5'-phosphates. This is Formamidopyrimidine-DNA glycosylase from Shewanella woodyi (strain ATCC 51908 / MS32).